A 267-amino-acid chain; its full sequence is Phyllosphere-induced regulator PhyR (267 aa).

In terms of domain architecture, Response regulatory spans 139–253 (EILIIEDEPL…NVSAVISQAL (115 aa)). Aspartate 190 carries the post-translational modification 4-aspartylphosphate.

In terms of biological role, key regulator for adaptation to epiphytic life (leaf colonizing) of the bacterium. Positively regulates several genes including katE, sodA, hsp20, dps and gloA. However, it is not known whether this regulation is direct or indirect. Also induces several dehydrogenases. The protein is Phyllosphere-induced regulator PhyR (phyR) of Methylorubrum extorquens (strain ATCC 14718 / DSM 1338 / JCM 2805 / NCIMB 9133 / AM1) (Methylobacterium extorquens).